The primary structure comprises 87 residues: Chromosomal protein MC1b (87 aa).

In terms of biological role, protects DNA against thermal denaturation and modulates transcription. This is Chromosomal protein MC1b from Methanothrix soehngenii (Methanosaeta concilii).